Here is a 925-residue protein sequence, read N- to C-terminus: Protein translocase subunit SecA (925 aa).

ATP-binding positions include Gln-87, Gly-105–Thr-109, and Asp-515. Cys-909, Cys-911, Cys-920, and His-921 together coordinate Zn(2+).

Belongs to the SecA family. As to quaternary structure, monomer and homodimer. Part of the essential Sec protein translocation apparatus which comprises SecA, SecYEG and auxiliary proteins SecDF-YajC and YidC. It depends on Zn(2+) as a cofactor.

The protein localises to the cell inner membrane. Its subcellular location is the cytoplasm. The enzyme catalyses ATP + H2O + cellular proteinSide 1 = ADP + phosphate + cellular proteinSide 2.. Functionally, part of the Sec protein translocase complex. Interacts with the SecYEG preprotein conducting channel. Has a central role in coupling the hydrolysis of ATP to the transfer of proteins into and across the cell membrane, serving both as a receptor for the preprotein-SecB complex and as an ATP-driven molecular motor driving the stepwise translocation of polypeptide chains across the membrane. The polypeptide is Protein translocase subunit SecA (Cupriavidus necator (strain ATCC 17699 / DSM 428 / KCTC 22496 / NCIMB 10442 / H16 / Stanier 337) (Ralstonia eutropha)).